The sequence spans 126 residues: Small ribosomal subunit protein uS12 (126 aa).

Asp89 is subject to 3-methylthioaspartic acid.

It belongs to the universal ribosomal protein uS12 family. As to quaternary structure, part of the 30S ribosomal subunit. Contacts proteins S8 and S17. May interact with IF1 in the 30S initiation complex.

Its function is as follows. With S4 and S5 plays an important role in translational accuracy. In terms of biological role, interacts with and stabilizes bases of the 16S rRNA that are involved in tRNA selection in the A site and with the mRNA backbone. Located at the interface of the 30S and 50S subunits, it traverses the body of the 30S subunit contacting proteins on the other side and probably holding the rRNA structure together. The combined cluster of proteins S8, S12 and S17 appears to hold together the shoulder and platform of the 30S subunit. The polypeptide is Small ribosomal subunit protein uS12 (Carboxydothermus hydrogenoformans (strain ATCC BAA-161 / DSM 6008 / Z-2901)).